Consider the following 144-residue polypeptide: uncharacterized protein (144 aa).

2 helical membrane-spanning segments follow: residues 10 to 30 (ILTR…GLGP) and 60 to 80 (YVFL…AIAV).

The protein resides in the membrane. This is an uncharacterized protein from Saccharomyces cerevisiae (strain ATCC 204508 / S288c) (Baker's yeast).